Here is a 347-residue protein sequence, read N- to C-terminus: Methylthioribose-1-phosphate isomerase (347 aa).

Residues 45 to 47 (RGA), Arg-88, and Gln-197 contribute to the substrate site. Asp-238 (proton donor) is an active-site residue. Position 248–249 (248–249 (NK)) interacts with substrate.

The protein belongs to the eIF-2B alpha/beta/delta subunits family. MtnA subfamily.

It carries out the reaction 5-(methylsulfanyl)-alpha-D-ribose 1-phosphate = 5-(methylsulfanyl)-D-ribulose 1-phosphate. It participates in amino-acid biosynthesis; L-methionine biosynthesis via salvage pathway; L-methionine from S-methyl-5-thio-alpha-D-ribose 1-phosphate: step 1/6. In terms of biological role, catalyzes the interconversion of methylthioribose-1-phosphate (MTR-1-P) into methylthioribulose-1-phosphate (MTRu-1-P). The sequence is that of Methylthioribose-1-phosphate isomerase from Nostoc sp. (strain PCC 7120 / SAG 25.82 / UTEX 2576).